Reading from the N-terminus, the 71-residue chain is UPF0346 protein SP70585_0986 (71 aa).

It belongs to the UPF0346 family.

The chain is UPF0346 protein SP70585_0986 from Streptococcus pneumoniae (strain 70585).